We begin with the raw amino-acid sequence, 405 residues long: Tyrosine--tRNA ligase (405 aa).

Tyr-35 lines the L-tyrosine pocket. The short motif at 40–49 (ATSSSLHIGH) is the 'HIGH' region element. 2 residues coordinate L-tyrosine: Tyr-166 and Gln-170. The short motif at 226–230 (KMGKS) is the 'KMSKS' region element. Residue Lys-229 coordinates ATP. In terms of domain architecture, S4 RNA-binding spans 340 to 404 (VLLINLMLDS…VGKKKFLRIV (65 aa)).

It belongs to the class-I aminoacyl-tRNA synthetase family. TyrS type 1 subfamily. Homodimer.

The protein localises to the cytoplasm. The catalysed reaction is tRNA(Tyr) + L-tyrosine + ATP = L-tyrosyl-tRNA(Tyr) + AMP + diphosphate + H(+). Catalyzes the attachment of tyrosine to tRNA(Tyr) in a two-step reaction: tyrosine is first activated by ATP to form Tyr-AMP and then transferred to the acceptor end of tRNA(Tyr). In Borreliella afzelii (strain PKo) (Borrelia afzelii), this protein is Tyrosine--tRNA ligase.